The chain runs to 293 residues: Pyridoxal 5'-phosphate synthase subunit PdxS (293 aa).

Asp-23 contributes to the D-ribose 5-phosphate binding site. The active-site Schiff-base intermediate with D-ribose 5-phosphate is the Lys-80. Residue Gly-152 participates in D-ribose 5-phosphate binding. Arg-164 is a binding site for D-glyceraldehyde 3-phosphate. D-ribose 5-phosphate contacts are provided by residues Gly-213 and 234–235 (GS).

It belongs to the PdxS/SNZ family. In the presence of PdxT, forms a dodecamer of heterodimers.

The enzyme catalyses aldehydo-D-ribose 5-phosphate + D-glyceraldehyde 3-phosphate + L-glutamine = pyridoxal 5'-phosphate + L-glutamate + phosphate + 3 H2O + H(+). Its pathway is cofactor biosynthesis; pyridoxal 5'-phosphate biosynthesis. Catalyzes the formation of pyridoxal 5'-phosphate from ribose 5-phosphate (RBP), glyceraldehyde 3-phosphate (G3P) and ammonia. The ammonia is provided by the PdxT subunit. Can also use ribulose 5-phosphate and dihydroxyacetone phosphate as substrates, resulting from enzyme-catalyzed isomerization of RBP and G3P, respectively. In Chloroflexus aggregans (strain MD-66 / DSM 9485), this protein is Pyridoxal 5'-phosphate synthase subunit PdxS.